The following is a 348-amino-acid chain: Dihydroorotase (348 aa).

Zn(2+) contacts are provided by histidine 14 and histidine 16. Substrate is bound by residues 16-18 and asparagine 42; that span reads HLR. Zn(2+) is bound by residues lysine 100, histidine 137, and histidine 175. Lysine 100 bears the N6-carboxylysine mark. Histidine 137 provides a ligand contact to substrate. Residue leucine 220 participates in substrate binding. Residue aspartate 248 coordinates Zn(2+). The active site involves aspartate 248. 2 residues coordinate substrate: histidine 252 and alanine 264.

The protein belongs to the metallo-dependent hydrolases superfamily. DHOase family. Class II DHOase subfamily. As to quaternary structure, homodimer. The cofactor is Zn(2+).

The enzyme catalyses (S)-dihydroorotate + H2O = N-carbamoyl-L-aspartate + H(+). It participates in pyrimidine metabolism; UMP biosynthesis via de novo pathway; (S)-dihydroorotate from bicarbonate: step 3/3. Its function is as follows. Catalyzes the reversible cyclization of carbamoyl aspartate to dihydroorotate. This Pseudomonas fluorescens (strain ATCC BAA-477 / NRRL B-23932 / Pf-5) protein is Dihydroorotase.